We begin with the raw amino-acid sequence, 127 residues long: Small ribosomal subunit protein uS11 (127 aa).

The protein belongs to the universal ribosomal protein uS11 family. As to quaternary structure, part of the 30S ribosomal subunit. Interacts with proteins S7 and S18. Binds to IF-3.

Functionally, located on the platform of the 30S subunit, it bridges several disparate RNA helices of the 16S rRNA. Forms part of the Shine-Dalgarno cleft in the 70S ribosome. The sequence is that of Small ribosomal subunit protein uS11 from Streptococcus mutans serotype c (strain ATCC 700610 / UA159).